The following is a 758-amino-acid chain: 5-methyltetrahydropteroyltriglutamate--homocysteine methyltransferase (758 aa).

Residues 17-20 and Lys117 contribute to the 5-methyltetrahydropteroyltri-L-glutamate site; that span reads RELK. Residues 434 to 436 and Glu487 contribute to the L-homocysteine site; that span reads IGS. L-methionine is bound by residues 434-436 and Glu487; that span reads IGS. Residues 518-519 and Trp564 each bind 5-methyltetrahydropteroyltri-L-glutamate; that span reads RC. Residue Asp602 participates in L-homocysteine binding. Asp602 serves as a coordination point for L-methionine. Glu608 serves as a coordination point for 5-methyltetrahydropteroyltri-L-glutamate. Zn(2+) contacts are provided by His644, Cys646, and Glu668. Residue His697 is the Proton donor of the active site. Cys729 contacts Zn(2+).

This sequence belongs to the vitamin-B12 independent methionine synthase family. The cofactor is Zn(2+).

It catalyses the reaction 5-methyltetrahydropteroyltri-L-glutamate + L-homocysteine = tetrahydropteroyltri-L-glutamate + L-methionine. The protein operates within amino-acid biosynthesis; L-methionine biosynthesis via de novo pathway; L-methionine from L-homocysteine (MetE route): step 1/1. In terms of biological role, catalyzes the transfer of a methyl group from 5-methyltetrahydrofolate to homocysteine resulting in methionine formation. In Photorhabdus laumondii subsp. laumondii (strain DSM 15139 / CIP 105565 / TT01) (Photorhabdus luminescens subsp. laumondii), this protein is 5-methyltetrahydropteroyltriglutamate--homocysteine methyltransferase.